Consider the following 208-residue polypeptide: Uracil phosphoribosyltransferase (208 aa).

5-phospho-alpha-D-ribose 1-diphosphate is bound by residues arginine 78, arginine 103, and 130 to 138 (DPMLATGGS). Uracil-binding positions include isoleucine 193 and 198 to 200 (GDA). Aspartate 199 contributes to the 5-phospho-alpha-D-ribose 1-diphosphate binding site.

Belongs to the UPRTase family. Requires Mg(2+) as cofactor.

It carries out the reaction UMP + diphosphate = 5-phospho-alpha-D-ribose 1-diphosphate + uracil. The protein operates within pyrimidine metabolism; UMP biosynthesis via salvage pathway; UMP from uracil: step 1/1. Its activity is regulated as follows. Allosterically activated by GTP. In terms of biological role, catalyzes the conversion of uracil and 5-phospho-alpha-D-ribose 1-diphosphate (PRPP) to UMP and diphosphate. In Blochmanniella pennsylvanica (strain BPEN), this protein is Uracil phosphoribosyltransferase.